The chain runs to 340 residues: Putative D-lactate dehydrogenase (340 aa).

Residues 153–154, aspartate 174, 206–207, 233–235, and aspartate 259 each bind NAD(+); these read NI, TP, and VSR. Arginine 235 is an active-site residue. Residue glutamate 264 is part of the active site. Catalysis depends on histidine 296, which acts as the Proton donor.

Belongs to the D-isomer specific 2-hydroxyacid dehydrogenase family.

The catalysed reaction is (R)-lactate + NAD(+) = pyruvate + NADH + H(+). The sequence is that of Putative D-lactate dehydrogenase (ldhA) from Dictyostelium discoideum (Social amoeba).